The following is a 149-amino-acid chain: Transcriptional regulator MraZ (149 aa).

SpoVT-AbrB domains are found at residues 7–54 (KYVN…GISH) and 83–126 (AVQL…QPQN).

The protein belongs to the MraZ family. As to quaternary structure, forms oligomers.

Its subcellular location is the cytoplasm. It localises to the nucleoid. The chain is Transcriptional regulator MraZ from Rickettsia akari (strain Hartford).